The following is a 392-amino-acid chain: tRNA(Met) cytidine acetate ligase (392 aa).

Residues 7-20 (VVEY…HQLH), glycine 101, asparagine 162, and 187-188 (RI) each bind ATP.

This sequence belongs to the TmcAL family.

It localises to the cytoplasm. It catalyses the reaction cytidine(34) in elongator tRNA(Met) + acetate + ATP = N(4)-acetylcytidine(34) in elongator tRNA(Met) + AMP + diphosphate. In terms of biological role, catalyzes the formation of N(4)-acetylcytidine (ac(4)C) at the wobble position of elongator tRNA(Met), using acetate and ATP as substrates. First activates an acetate ion to form acetyladenylate (Ac-AMP) and then transfers the acetyl group to tRNA to form ac(4)C34. The protein is tRNA(Met) cytidine acetate ligase of Listeria welshimeri serovar 6b (strain ATCC 35897 / DSM 20650 / CCUG 15529 / CIP 8149 / NCTC 11857 / SLCC 5334 / V8).